We begin with the raw amino-acid sequence, 191 residues long: Adenylate kinase (191 aa).

ATP is bound at residue 11–16; that stretch reads GAGKGT. The segment at 31 to 60 is NMP; the sequence is STGDILRSNVAERSPLGIKAKDYMDKGDLV. AMP is bound by residues Thr-32, Arg-37, 58–60, 86–89, and Gln-93; these read DLV and GFPR. An LID region spans residues 132–138; that stretch reads SRKREDD. Arg-133 serves as a coordination point for ATP. AMP contacts are provided by Arg-135 and Arg-146. Asn-174 is a binding site for ATP.

It belongs to the adenylate kinase family. In terms of assembly, monomer.

Its subcellular location is the cytoplasm. The enzyme catalyses AMP + ATP = 2 ADP. It functions in the pathway purine metabolism; AMP biosynthesis via salvage pathway; AMP from ADP: step 1/1. In terms of biological role, catalyzes the reversible transfer of the terminal phosphate group between ATP and AMP. Plays an important role in cellular energy homeostasis and in adenine nucleotide metabolism. The chain is Adenylate kinase from Trichodesmium erythraeum (strain IMS101).